Here is a 559-residue protein sequence, read N- to C-terminus: Branched-chain-amino-acid aminotransferase-like protein 2 (559 aa).

This sequence belongs to the class-IV pyridoxal-phosphate-dependent aminotransferase family.

The sequence is that of Branched-chain-amino-acid aminotransferase-like protein 2 from Arabidopsis thaliana (Mouse-ear cress).